A 254-amino-acid polypeptide reads, in one-letter code: Pyruvate aldolase (254 aa).

His48 acts as the Proton acceptor in catalysis. 2 residues coordinate a divalent metal cation: Glu151 and Asp177.

The protein belongs to the HpcH/HpaI aldolase family. A divalent metal cation serves as cofactor.

It catalyses the reaction D-glyceraldehyde + pyruvate = 2-dehydro-3-deoxy-L-galactonate. Its function is as follows. Aldolase which can catalyze in vitro the aldolisation reaction between pyruvate (PA) and D-glyceraldehyde (D-GA) to form 2-dehydro-3-deoxy-L-galactonate. This is Pyruvate aldolase from Rhizobium etli (strain ATCC 51251 / DSM 11541 / JCM 21823 / NBRC 15573 / CFN 42).